The chain runs to 228 residues: NAD(P)H-hydrate epimerase (228 aa).

Residues 10 to 214 (AIDIDQELFN…DLERKYDLKI (205 aa)) enclose the YjeF N-terminal domain. 58-62 (NNGGD) serves as a coordination point for (6S)-NADPHX. K(+)-binding residues include N59 and D123. (6S)-NADPHX is bound by residues 127 to 133 (GFSFKPP) and D156. S159 lines the K(+) pocket.

It belongs to the NnrE/AIBP family. The cofactor is K(+).

The enzyme catalyses (6R)-NADHX = (6S)-NADHX. The catalysed reaction is (6R)-NADPHX = (6S)-NADPHX. Functionally, catalyzes the epimerization of the S- and R-forms of NAD(P)HX, a damaged form of NAD(P)H that is a result of enzymatic or heat-dependent hydration. This is a prerequisite for the S-specific NAD(P)H-hydrate dehydratase to allow the repair of both epimers of NAD(P)HX. This Pediculus humanus subsp. corporis (Body louse) protein is NAD(P)H-hydrate epimerase.